The primary structure comprises 608 residues: Tectonic-3 (608 aa).

An N-terminal signal peptide occupies residues 1–22; the sequence is MRTPQLALLQVFLLMFPDGVRP. A disordered region spans residues 23 to 58; it reads QPSSSPSGAVPTSLDLQPGTVGGTLQSSSEATATRP. The Extracellular segment spans residues 23–586; sequence QPSSSPSGAV…AFSRGVSSQK (564 aa). Polar residues predominate over residues 45-54; the sequence is GTLQSSSEAT. Asn-78, Asn-179, and Asn-347 each carry an N-linked (GlcNAc...) asparagine glycan. A helical transmembrane segment spans residues 587–607; sequence CSVSPVLILCLLLLGVLNLET. A topological domain (cytoplasmic) is located at residue Thr-608.

This sequence belongs to the tectonic family. In terms of assembly, part of the tectonic-like complex (also named B9 complex).

Its subcellular location is the membrane. Its function is as follows. Part of the tectonic-like complex which is required for tissue-specific ciliogenesis and may regulate ciliary membrane composition. May be involved in apoptosis regulation. Necessary for signal transduction through the sonic hedgehog (Shh) signaling pathway. In Macaca fascicularis (Crab-eating macaque), this protein is Tectonic-3 (TCTN3).